The primary structure comprises 456 residues: MKIEEVKSTTKTQRIATHSHVKGLGLDENGIAKQAAAGLVGQENAREACGVIVELIKSKKMAGRAVLLAGPPGTGKTALALAIAQELGNKVPFCPMVGSEVYSTEIKKTEVLMENFRRAIGLRIRETKEVYEGEVTELTPCETENPMGGYGKTISHVIIGLKTAKGTKQLKLDPSIYESLQKERVEVGDVIYIEANSGAVKRQGRSDTYATEFDLEAEEYVPLPKGDVHQKKEVIQDVTLHDLDVANARPQGGQDILSMMGQLMKPKKTEITDKLRGQINKVVNKYIDQGIAELVPGVLFIDEVHMLDIECFTYLHRALESSLAPIVIFATNRGNCIIRGTEDVASPHGIPLDLLDRVMIIRTMLYTPQEMKQIIKIRAQTEGINISEEALNHLGEIGTKTTLRYSVQLLTPANLLAKINGKDSIEKEHVEEINELFYDAKSSAKILAEQQEKFMK.

70 to 77 (GPPGTGKT) contributes to the ATP binding site.

Belongs to the RuvB family. In terms of assembly, forms homohexameric rings. Can form a dodecamer with ruvbl2 made of two stacked hexameric rings. Is a component of the RNA polymerase II holoenzyme complex. Component of the chromatin-remodeling Ino80 complex. Component of some MLL1/MLL complex.

The protein localises to the nucleus. It is found in the dynein axonemal particle. The enzyme catalyses ATP + H2O = ADP + phosphate + H(+). Functionally, has single-stranded DNA-stimulated ATPase and ATP-dependent DNA helicase (3' to 5') activity suggesting a role in nuclear processes such as recombination and transcription. Proposed core component of the chromatin remodeling INO80 complex which exhibits DNA- and nucleosome-activated ATPase activity and catalyzes ATP-dependent nucleosome sliding. The polypeptide is RuvB-like 1 (ruvbl1) (Xenopus laevis (African clawed frog)).